Consider the following 383-residue polypeptide: tRNA-specific 2-thiouridylase MnmA (383 aa).

ATP-binding positions include 9–16 (GMSGGVDS) and M35. The segment at 95–97 (NPD) is interaction with target base in tRNA. C100 functions as the Nucleophile in the catalytic mechanism. A disulfide bond links C100 and C196. ATP is bound at residue G124. The interaction with tRNA stretch occupies residues 146 to 148 (KDQ). The Cysteine persulfide intermediate role is filled by C196. Positions 308–309 (RY) are interaction with tRNA.

Belongs to the MnmA/TRMU family.

It is found in the cytoplasm. It carries out the reaction S-sulfanyl-L-cysteinyl-[protein] + uridine(34) in tRNA + AH2 + ATP = 2-thiouridine(34) in tRNA + L-cysteinyl-[protein] + A + AMP + diphosphate + H(+). Catalyzes the 2-thiolation of uridine at the wobble position (U34) of tRNA, leading to the formation of s(2)U34. The protein is tRNA-specific 2-thiouridylase MnmA of Burkholderia pseudomallei (strain 1106a).